The chain runs to 341 residues: GTPase Obg (341 aa).

In terms of domain architecture, Obg spans 1 to 159; sequence MKFVDEALIK…RNLRLELRVL (159 aa). The interval 128 to 150 is disordered; sequence TRYKSSVNRSPRQTTPGSPGESR. Positions 129 to 144 are enriched in polar residues; that stretch reads RYKSSVNRSPRQTTPG. The OBG-type G domain maps to 160-334; it reads ADVGLLGLPN…LCYALMQLID (175 aa). Residues 166–173, 191–195, 213–216, 283–286, and 315–317 contribute to the GTP site; these read GLPNAGKS, FTTLH, DIPG, NKID, and SAI. Mg(2+) contacts are provided by S173 and T193.

The protein belongs to the TRAFAC class OBG-HflX-like GTPase superfamily. OBG GTPase family. As to quaternary structure, monomer. Requires Mg(2+) as cofactor.

It localises to the cytoplasm. An essential GTPase which binds GTP, GDP and possibly (p)ppGpp with moderate affinity, with high nucleotide exchange rates and a fairly low GTP hydrolysis rate. Plays a role in control of the cell cycle, stress response, ribosome biogenesis and in those bacteria that undergo differentiation, in morphogenesis control. This Legionella pneumophila subsp. pneumophila (strain Philadelphia 1 / ATCC 33152 / DSM 7513) protein is GTPase Obg.